Consider the following 368-residue polypeptide: 3-dehydroquinate synthase (368 aa).

NAD(+) contacts are provided by residues 109 to 113 (GVIGD), 133 to 134 (TS), Lys-146, Lys-155, and 173 to 176 (TLQT). Positions 188, 253, and 270 each coordinate Zn(2+).

It belongs to the sugar phosphate cyclases superfamily. Dehydroquinate synthase family. The cofactor is Co(2+). Zn(2+) is required as a cofactor. It depends on NAD(+) as a cofactor.

Its subcellular location is the cytoplasm. It catalyses the reaction 7-phospho-2-dehydro-3-deoxy-D-arabino-heptonate = 3-dehydroquinate + phosphate. Its pathway is metabolic intermediate biosynthesis; chorismate biosynthesis; chorismate from D-erythrose 4-phosphate and phosphoenolpyruvate: step 2/7. Its function is as follows. Catalyzes the conversion of 3-deoxy-D-arabino-heptulosonate 7-phosphate (DAHP) to dehydroquinate (DHQ). In Synechococcus sp. (strain ATCC 27144 / PCC 6301 / SAUG 1402/1) (Anacystis nidulans), this protein is 3-dehydroquinate synthase.